The sequence spans 843 residues: Molybdenum cofactor sulfurase (843 aa).

At Lys-241 the chain carries N6-(pyridoxal phosphate)lysine. Residue Cys-405 is part of the active site. The 180-residue stretch at 657–836 folds into the MOSC domain; that stretch reads QYLRKFVMPG…LMVGDIVIPS (180 aa).

It belongs to the class-V pyridoxal-phosphate-dependent aminotransferase family. MOCOS subfamily. Pyridoxal 5'-phosphate serves as cofactor.

It carries out the reaction Mo-molybdopterin + L-cysteine + AH2 = thio-Mo-molybdopterin + L-alanine + A + H2O. Its function is as follows. Sulfurates the molybdenum cofactor. Sulfation of molybdenum is essential for xanthine dehydrogenase (XDH) and aldehyde oxidase (ADO) enzymes in which molybdenum cofactor is liganded by 1 oxygen and 1 sulfur atom in active form. This is Molybdenum cofactor sulfurase from Aspergillus fumigatus (strain CBS 144.89 / FGSC A1163 / CEA10) (Neosartorya fumigata).